The sequence spans 650 residues: Altered inheritance of mitochondria protein 21 (650 aa).

Composition is skewed to polar residues over residues 1–10 (MQETQDQLEQ), 31–51 (SVPS…VGQN), 63–74 (TSSASPDGTPST), and 85–96 (SDISGVNEQNFE). Disordered regions lie at residues 1-148 (MQET…EKNA), 197-529 (GLER…PAHI), and 559-650 (PTCS…EESS). Positions 198-217 (LERRTSKPDLETNEIQDAKS) are enriched in basic and acidic residues. Polar residues-rich tracts occupy residues 242–254 (SCQN…GTTS), 264–274 (ESQSSGTSQAS), and 282–296 (TNTS…TAQA). Basic and acidic residues-rich tracts occupy residues 320–335 (QTDE…KENP) and 368–379 (PAKDGEPVDSEK). Positions 407–417 (PNKRPPPKKPS) are enriched in basic residues. A compositionally biased stretch (polar residues) spans 444-462 (DSGNSLLSGKRANITNNLN). The segment covering 488 to 507 (QQTGSDGGSQSSENQTSSQS) has biased composition (low complexity). The span at 515 to 526 (RRARGPKGRKLP) shows a compositional bias: basic residues. A compositionally biased stretch (basic and acidic residues) spans 562-573 (SEKDSEPLKDIP). Polar residues predominate over residues 578-588 (VSPSNPKSMSE). Residues 640–650 (GESDANQEESS) show a composition bias toward acidic residues.

It belongs to the AIM21 family.

The protein resides in the cytoplasm. It is found in the cytoskeleton. The protein localises to the actin patch. Functionally, involved in mitochondrial migration along actin filaments. The polypeptide is Altered inheritance of mitochondria protein 21 (AIM21) (Lachancea thermotolerans (strain ATCC 56472 / CBS 6340 / NRRL Y-8284) (Yeast)).